Consider the following 702-residue polypeptide: Elongation factor G 2 (702 aa).

Residues 8-290 (ERYRNIGISA…AVIDYLPSPV (283 aa)) enclose the tr-type G domain. Residues 17 to 24 (AHIDAGKT), 88 to 92 (DTPGH), and 142 to 145 (NKMD) contribute to the GTP site.

The protein belongs to the TRAFAC class translation factor GTPase superfamily. Classic translation factor GTPase family. EF-G/EF-2 subfamily.

The protein resides in the cytoplasm. Catalyzes the GTP-dependent ribosomal translocation step during translation elongation. During this step, the ribosome changes from the pre-translocational (PRE) to the post-translocational (POST) state as the newly formed A-site-bound peptidyl-tRNA and P-site-bound deacylated tRNA move to the P and E sites, respectively. Catalyzes the coordinated movement of the two tRNA molecules, the mRNA and conformational changes in the ribosome. The protein is Elongation factor G 2 of Cupriavidus metallidurans (strain ATCC 43123 / DSM 2839 / NBRC 102507 / CH34) (Ralstonia metallidurans).